The sequence spans 77 residues: METKKISYFLLPSLMIVALIFQPMCSAFTIAEPYIHPCMKGFCSFKSECANKCIFMGHHKGGDCIGGLDGIYCCCLA.

The first 27 residues, 1-27, serve as a signal peptide directing secretion; the sequence is METKKISYFLLPSLMIVALIFQPMCSA. 4 disulfide bridges follow: cysteine 38-cysteine 75, cysteine 43-cysteine 64, cysteine 49-cysteine 73, and cysteine 53-cysteine 74.

This sequence belongs to the DEFL family.

It is found in the secreted. This Arabidopsis thaliana (Mouse-ear cress) protein is Defensin-like protein 91 (LCR47).